The following is a 131-amino-acid chain: Peptide methionine sulfoxide reductase MsrB (131 aa).

A MsrB domain is found at 8-130 (LDEWRSMLDP…NSVCIDLRPR (123 aa)). Residues Cys-47, Cys-50, Cys-96, and Cys-99 each coordinate Zn(2+). Cys-119 functions as the Nucleophile in the catalytic mechanism.

This sequence belongs to the MsrB Met sulfoxide reductase family. The cofactor is Zn(2+).

The enzyme catalyses L-methionyl-[protein] + [thioredoxin]-disulfide + H2O = L-methionyl-(R)-S-oxide-[protein] + [thioredoxin]-dithiol. The protein is Peptide methionine sulfoxide reductase MsrB of Pseudomonas putida (strain GB-1).